Reading from the N-terminus, the 261-residue chain is Protein FAM78B (261 aa).

This sequence belongs to the FAM78 family.

The polypeptide is Protein FAM78B (FAM78B) (Homo sapiens (Human)).